Here is a 197-residue protein sequence, read N- to C-terminus: Ribosome maturation factor RimM (197 aa).

The PRC barrel domain maps to 99-174 (EDEFYQVDLI…LVVEPVAAGL (76 aa)).

It belongs to the RimM family. Binds ribosomal protein uS19.

The protein localises to the cytoplasm. Functionally, an accessory protein needed during the final step in the assembly of 30S ribosomal subunit, possibly for assembly of the head region. Essential for efficient processing of 16S rRNA. May be needed both before and after RbfA during the maturation of 16S rRNA. It has affinity for free ribosomal 30S subunits but not for 70S ribosomes. In Bartonella quintana (strain Toulouse) (Rochalimaea quintana), this protein is Ribosome maturation factor RimM.